Reading from the N-terminus, the 273-residue chain is Putative phosphoenolpyruvate synthase regulatory protein (273 aa).

153–160 (AVSRAGKT) is a binding site for ADP.

It belongs to the pyruvate, phosphate/water dikinase regulatory protein family. PSRP subfamily.

The enzyme catalyses [pyruvate, water dikinase] + ADP = [pyruvate, water dikinase]-phosphate + AMP + H(+). It catalyses the reaction [pyruvate, water dikinase]-phosphate + phosphate + H(+) = [pyruvate, water dikinase] + diphosphate. Bifunctional serine/threonine kinase and phosphorylase involved in the regulation of the phosphoenolpyruvate synthase (PEPS) by catalyzing its phosphorylation/dephosphorylation. This chain is Putative phosphoenolpyruvate synthase regulatory protein, found in Xylella fastidiosa (strain M23).